A 445-amino-acid chain; its full sequence is Rab GDP dissociation inhibitor beta (445 aa).

Residue methionine 1 is modified to N-acetylmethionine. Position 57 is an N6-succinyllysine (lysine 57). At lysine 112 the chain carries N6-acetyllysine. Serine 130 carries the post-translational modification Phosphoserine. Lysine 269 carries the post-translational modification N6-acetyllysine. Serine 382 carries the phosphoserine modification.

This sequence belongs to the Rab GDI family. Interacts with RHOH. Interacts with the GDP-bound inactive forms of RAB3A, RAB3B, RAB3C, RAB5A, RAB5B, RAB5C, RAB8A, RAB8B, RAB10, RAB12, RAB35, and RAB43; binds RAB3D to a lesser extent. Interacts with DZIP1; this interaction negatively regulates the interaction of GDI2 with GDP-bound RAB8A.

It is found in the cytoplasm. Its subcellular location is the membrane. The protein localises to the golgi apparatus. The protein resides in the trans-Golgi network. Functionally, GDP-dissociation inhibitor preventing the GDP to GTP exchange of most Rab proteins. By keeping these small GTPases in their inactive GDP-bound form regulates intracellular membrane trafficking. Negatively regulates protein transport to the cilium and ciliogenesis through the inhibition of RAB8A. This chain is Rab GDP dissociation inhibitor beta (GDI2), found in Canis lupus familiaris (Dog).